The following is an 89-amino-acid chain: Small ribosomal subunit protein uS17 (89 aa).

This sequence belongs to the universal ribosomal protein uS17 family. Part of the 30S ribosomal subunit.

Functionally, one of the primary rRNA binding proteins, it binds specifically to the 5'-end of 16S ribosomal RNA. In Ralstonia pickettii (strain 12J), this protein is Small ribosomal subunit protein uS17.